The primary structure comprises 318 residues: Aspartate carbamoyltransferase catalytic subunit (318 aa).

Residues arginine 59 and threonine 60 each coordinate carbamoyl phosphate. Lysine 87 is a binding site for L-aspartate. Positions 109, 137, and 140 each coordinate carbamoyl phosphate. L-aspartate is bound by residues arginine 170 and arginine 224. Carbamoyl phosphate contacts are provided by glycine 265 and proline 266.

This sequence belongs to the aspartate/ornithine carbamoyltransferase superfamily. ATCase family. Heterododecamer (2C3:3R2) of six catalytic PyrB chains organized as two trimers (C3), and six regulatory PyrI chains organized as three dimers (R2).

It carries out the reaction carbamoyl phosphate + L-aspartate = N-carbamoyl-L-aspartate + phosphate + H(+). It participates in pyrimidine metabolism; UMP biosynthesis via de novo pathway; (S)-dihydroorotate from bicarbonate: step 2/3. Functionally, catalyzes the condensation of carbamoyl phosphate and aspartate to form carbamoyl aspartate and inorganic phosphate, the committed step in the de novo pyrimidine nucleotide biosynthesis pathway. This Rhizobium rhizogenes (strain K84 / ATCC BAA-868) (Agrobacterium radiobacter) protein is Aspartate carbamoyltransferase catalytic subunit.